Here is a 156-residue protein sequence, read N- to C-terminus: Small ribosomal subunit protein uS7 (156 aa).

Belongs to the universal ribosomal protein uS7 family. Part of the 30S ribosomal subunit. Contacts proteins S9 and S11.

Functionally, one of the primary rRNA binding proteins, it binds directly to 16S rRNA where it nucleates assembly of the head domain of the 30S subunit. Is located at the subunit interface close to the decoding center, probably blocks exit of the E-site tRNA. In Mycoplasmopsis synoviae (strain 53) (Mycoplasma synoviae), this protein is Small ribosomal subunit protein uS7.